We begin with the raw amino-acid sequence, 172 residues long: Adenine phosphoribosyltransferase (172 aa).

The protein belongs to the purine/pyrimidine phosphoribosyltransferase family. In terms of assembly, homodimer.

Its subcellular location is the cytoplasm. The catalysed reaction is AMP + diphosphate = 5-phospho-alpha-D-ribose 1-diphosphate + adenine. It participates in purine metabolism; AMP biosynthesis via salvage pathway; AMP from adenine: step 1/1. Functionally, catalyzes a salvage reaction resulting in the formation of AMP, that is energically less costly than de novo synthesis. The polypeptide is Adenine phosphoribosyltransferase (Clostridium novyi (strain NT)).